The chain runs to 277 residues: Probable ABC transporter permease protein y4oR (277 aa).

Helical transmembrane passes span 15–35 (LWTL…TWMV), 79–99 (VVTI…AYAL), 109–129 (LLVA…VPVY), 140–160 (TYQA…IWLM), 189–209 (IMMP…FIAV), 213–233 (FLFA…AMLG), and 242–262 (WDAV…FAFI). The ABC transmembrane type-1 domain occupies 74-263 (IINSAVVTIV…TPVIAFAFIM (190 aa)).

The protein belongs to the binding-protein-dependent transport system permease family. MalFG subfamily.

The protein resides in the cell inner membrane. Functionally, probably part of the binding-protein-dependent transport system y4oPQRS. This system probably transports a sugar-like molecule. Probably responsible for the translocation of the substrate across the membrane. The protein is Probable ABC transporter permease protein y4oR of Sinorhizobium fredii (strain NBRC 101917 / NGR234).